The following is a 552-amino-acid chain: Chromosomal replication initiator protein DnaA (552 aa).

Residues Met1–Thr90 are domain I, interacts with DnaA modulators. Residues Thr90 to Gly210 are domain II. The disordered stretch occupies residues Glu113–Asn213. The span at Pro155–Gln170 shows a compositional bias: low complexity. The domain III, AAA+ region stretch occupies residues Ser211 to Ala427. ATP is bound by residues Gly255, Gly257, Lys258, and Thr259. The domain IV, binds dsDNA stretch occupies residues Ser428 to Ala552.

The protein belongs to the DnaA family. Oligomerizes as a right-handed, spiral filament on DNA at oriC.

The protein resides in the cytoplasm. In terms of biological role, plays an essential role in the initiation and regulation of chromosomal replication. ATP-DnaA binds to the origin of replication (oriC) to initiate formation of the DNA replication initiation complex once per cell cycle. Binds the DnaA box (a 9 base pair repeat at the origin) and separates the double-stranded (ds)DNA. Forms a right-handed helical filament on oriC DNA; dsDNA binds to the exterior of the filament while single-stranded (ss)DNA is stabiized in the filament's interior. The ATP-DnaA-oriC complex binds and stabilizes one strand of the AT-rich DNA unwinding element (DUE), permitting loading of DNA polymerase. After initiation quickly degrades to an ADP-DnaA complex that is not apt for DNA replication. Binds acidic phospholipids. The polypeptide is Chromosomal replication initiator protein DnaA (Corynebacterium diphtheriae (strain ATCC 700971 / NCTC 13129 / Biotype gravis)).